Consider the following 132-residue polypeptide: Protamine (132 aa).

2 disordered regions span residues 17–46 (GGKK…RGGR) and 96–115 (SMLK…RRRR). 2 stretches are compositionally biased toward basic residues: residues 18-46 (GKKR…RGGR) and 98-115 (LKKR…RRRR).

This sequence belongs to the UPF0771 family. In terms of tissue distribution, testis.

It is found in the nucleus. The protein resides in the chromosome. Functionally, protamines substitute for histones in the chromatin of sperm during the haploid phase of spermatogenesis. They compact sperm DNA into a highly condensed, stable and inactive complex. This Anthonomus grandis (Mexican cotton boll weevil) protein is Protamine.